The chain runs to 132 residues: Small ribosomal subunit protein uS11 (132 aa).

Belongs to the universal ribosomal protein uS11 family. Part of the 30S ribosomal subunit. Interacts with proteins S7 and S18. Binds to IF-3.

Functionally, located on the platform of the 30S subunit, it bridges several disparate RNA helices of the 16S rRNA. Forms part of the Shine-Dalgarno cleft in the 70S ribosome. The protein is Small ribosomal subunit protein uS11 of Dichelobacter nodosus (strain VCS1703A).